A 311-amino-acid chain; its full sequence is MYKQGEPNLWTGRLDSETDPKKFRHFQTVTFEDLSKLEKSSRPSGVGILGYAVDEGVALNKGRIGAKEGPDAIKQAFAGLPDLNQCEALVDYGNVYHDHEELIDTQKEFAMLAAKSIANHRQTFLLGGGHDIAYAQYLATRKVYPTQSIGVINIDAHFDTRAEQQSTSGTSFRQILEEDENTDYLVLGIAQGGNTQSLFDYAKEKKIDYVFADELLSHVSPTIKDMIERFVHEHDVIMFTICMDVIDSAFAPGVSAPAVLGLYPHTVLELAKRIIPSDKVSSVSIAEMNPTYDADNRTAKLVANLVHHFLK.

Residues histidine 130, aspartate 155, histidine 157, aspartate 159, cysteine 242, and aspartate 244 each contribute to the Mn(2+) site.

This sequence belongs to the arginase family. Mn(2+) serves as cofactor.

It catalyses the reaction N-formimidoyl-L-glutamate + H2O = formamide + L-glutamate. It functions in the pathway amino-acid degradation; L-histidine degradation into L-glutamate; L-glutamate from N-formimidoyl-L-glutamate (hydrolase route): step 1/1. Its function is as follows. Catalyzes the conversion of N-formimidoyl-L-glutamate to L-glutamate and formamide. The chain is Formimidoylglutamase from Staphylococcus aureus (strain bovine RF122 / ET3-1).